Consider the following 483-residue polypeptide: Phosphoenolpyruvate carboxylase (483 aa).

A disordered region spans residues 1–20 (MKVPRCMSTQHPDNVNPPFF).

Belongs to the PEPCase type 2 family. Homotetramer. Mg(2+) serves as cofactor.

The enzyme catalyses oxaloacetate + phosphate = phosphoenolpyruvate + hydrogencarbonate. Inhibited by NaCl, KCl, ATP, ADP, GTP and aspartate. Unlike E.coli, not regulated by acetyl-CoA. In terms of biological role, catalyzes the irreversible beta-carboxylation of phosphoenolpyruvate (PEP) to form oxaloacetate (OAA), a four-carbon dicarboxylic acid source for the tricarboxylic acid cycle. The protein is Phosphoenolpyruvate carboxylase (ppcA) of Methanothermobacter thermautotrophicus (strain ATCC 29096 / DSM 1053 / JCM 10044 / NBRC 100330 / Delta H) (Methanobacterium thermoautotrophicum).